A 254-amino-acid chain; its full sequence is Pimeloyl-[acyl-carrier protein] methyl ester esterase (254 aa).

Residues 14–242 enclose the AB hydrolase-1 domain; it reads LVLLHGWGMN…ASHAPFISHP (229 aa). Substrate contacts are provided by residues Trp-20, 82-83, and 143-147; these read SL and FLAIQ. Catalysis depends on Ser-82, which acts as the Nucleophile. Active-site residues include Asp-207 and His-235. His-235 is a binding site for substrate.

The protein belongs to the AB hydrolase superfamily. Carboxylesterase BioH family. Monomer.

The protein resides in the cytoplasm. It catalyses the reaction 6-carboxyhexanoyl-[ACP] methyl ester + H2O = 6-carboxyhexanoyl-[ACP] + methanol + H(+). It functions in the pathway cofactor biosynthesis; biotin biosynthesis. The physiological role of BioH is to remove the methyl group introduced by BioC when the pimeloyl moiety is complete. It allows to synthesize pimeloyl-ACP via the fatty acid synthetic pathway through the hydrolysis of the ester bonds of pimeloyl-ACP esters. This Aeromonas hydrophila subsp. hydrophila (strain ATCC 7966 / DSM 30187 / BCRC 13018 / CCUG 14551 / JCM 1027 / KCTC 2358 / NCIMB 9240 / NCTC 8049) protein is Pimeloyl-[acyl-carrier protein] methyl ester esterase.